Here is a 322-residue protein sequence, read N- to C-terminus: Beta-ketoacyl-[acyl-carrier-protein] synthase III (322 aa).

Active-site residues include Cys-113 and His-249. Residues 250–254 (QANVR) are ACP-binding. The active site involves Asn-279.

It belongs to the thiolase-like superfamily. FabH family. As to quaternary structure, homodimer.

It is found in the cytoplasm. The catalysed reaction is malonyl-[ACP] + acetyl-CoA + H(+) = 3-oxobutanoyl-[ACP] + CO2 + CoA. It participates in lipid metabolism; fatty acid biosynthesis. Functionally, catalyzes the condensation reaction of fatty acid synthesis by the addition to an acyl acceptor of two carbons from malonyl-ACP. Catalyzes the first condensation reaction which initiates fatty acid synthesis and may therefore play a role in governing the total rate of fatty acid production. Possesses both acetoacetyl-ACP synthase and acetyl transacylase activities. Its substrate specificity determines the biosynthesis of branched-chain and/or straight-chain of fatty acids. This chain is Beta-ketoacyl-[acyl-carrier-protein] synthase III, found in Anaplasma marginale (strain St. Maries).